The following is a 266-amino-acid chain: Sesquipedalian-1 (266 aa).

A PH domain is found at 17 to 113 (PVDNAGFLYK…WVKALSRASF (97 aa)). The tract at residues 165–184 (QPSVAPQRPPPLPPRRRASA) is disordered. A Phosphoserine modification is found at Ser183. The F&amp;H motif lies at 191 to 203 (SFAQLHARYGLEV).

This sequence belongs to the sesquipedalian family. In terms of assembly, forms homodimers and heterodimers with PHETA2. Interacts with OCRL and INPP5B. Interaction with OCRL may be important for endosomal morphology and function.

It is found in the early endosome. It localises to the recycling endosome. Its subcellular location is the golgi apparatus. The protein localises to the trans-Golgi network. The protein resides in the cytoplasmic vesicle. It is found in the clathrin-coated vesicle. In terms of biological role, plays a role in endocytic trafficking. Required for receptor recycling from endosomes, both to the trans-Golgi network and the plasma membrane. The sequence is that of Sesquipedalian-1 from Mus musculus (Mouse).